A 508-amino-acid chain; its full sequence is Maturase K (508 aa).

The protein belongs to the intron maturase 2 family. MatK subfamily.

It is found in the plastid. Its subcellular location is the chloroplast. Usually encoded in the trnK tRNA gene intron. Probably assists in splicing its own and other chloroplast group II introns. The sequence is that of Maturase K from Abies bracteata (Bristle-cone fir).